We begin with the raw amino-acid sequence, 390 residues long: GTPase Obg (390 aa).

Residues 1–159 (MKFIDESLIR…RDLLLELMLL (159 aa)) form the Obg domain. An OBG-type G domain is found at 160–333 (ADVGMLGLPN…LCRDIMDFII (174 aa)). GTP-binding positions include 166–173 (GLPNAGKS), 191–195 (FTTLV), 213–216 (DIPG), 283–286 (NKID), and 314–316 (SAA). Positions 173 and 193 each coordinate Mg(2+).

It belongs to the TRAFAC class OBG-HflX-like GTPase superfamily. OBG GTPase family. As to quaternary structure, monomer. Mg(2+) serves as cofactor.

Its subcellular location is the cytoplasm. In terms of biological role, an essential GTPase which binds GTP, GDP and possibly (p)ppGpp with moderate affinity, with high nucleotide exchange rates and a fairly low GTP hydrolysis rate. Plays a role in control of the cell cycle, stress response, ribosome biogenesis and in those bacteria that undergo differentiation, in morphogenesis control. This is GTPase Obg from Haemophilus influenzae (strain 86-028NP).